The chain runs to 227 residues: Germin-like protein subfamily T member 3 (227 aa).

The signal sequence occupies residues 1-26; the sequence is MAHISQISSFLSIVLIFLALCITLFT. The cysteines at positions 44 and 59 are disulfide-linked. The region spanning 71–219 is the Cupin type-1 domain; the sequence is SGLNTPLNTS…AFKADSKTIN (149 aa). Asn78 carries an N-linked (GlcNAc...) asparagine glycan. Residues His119, His121, and Glu126 each coordinate Mn(2+). An N-linked (GlcNAc...) asparagine glycan is attached at Asn143. His165 contacts Mn(2+).

Belongs to the germin family. In terms of assembly, oligomer (believed to be a pentamer but probably hexamer).

The protein localises to the secreted. Its subcellular location is the extracellular space. It is found in the apoplast. May play a role in plant defense. Probably has no oxalate oxidase activity even if the active site is conserved. This chain is Germin-like protein subfamily T member 3, found in Arabidopsis thaliana (Mouse-ear cress).